The following is a 500-amino-acid chain: Lysine--tRNA ligase (500 aa).

Residues Glu-407 and Glu-414 each contribute to the Mg(2+) site.

This sequence belongs to the class-II aminoacyl-tRNA synthetase family. As to quaternary structure, homodimer. It depends on Mg(2+) as a cofactor.

It localises to the cytoplasm. It carries out the reaction tRNA(Lys) + L-lysine + ATP = L-lysyl-tRNA(Lys) + AMP + diphosphate. The protein is Lysine--tRNA ligase of Azobacteroides pseudotrichonymphae genomovar. CFP2.